Reading from the N-terminus, the 450-residue chain is Putative serine/threonine-protein kinase R517/R518 (450 aa).

One can recognise a Protein kinase domain in the interval 9 to 290; it reads KMTDTVLGKG…WSELFHHYWF (282 aa). ATP contacts are provided by residues 15 to 23 and K38; that span reads LGKGGFSEV. Catalysis depends on D140, which acts as the Proton acceptor.

Belongs to the protein kinase superfamily. Ser/Thr protein kinase family.

The enzyme catalyses L-seryl-[protein] + ATP = O-phospho-L-seryl-[protein] + ADP + H(+). The catalysed reaction is L-threonyl-[protein] + ATP = O-phospho-L-threonyl-[protein] + ADP + H(+). The sequence is that of Putative serine/threonine-protein kinase R517/R518 from Acanthamoeba polyphaga mimivirus (APMV).